Consider the following 360-residue polypeptide: U7 snRNA-associated Sm-like protein LSm11 (360 aa).

Positions 1 to 29 (MEERERGARSAGAGSPARPPSPRLDVSSD) are disordered. Ser-15 and Ser-21 each carry phosphoserine. Arg-41 bears the Omega-N-methylarginine mark. The interval 68-143 (RGGGRGRGRA…PGRSRKAPRN (76 aa)) is disordered. A compositionally biased stretch (low complexity) spans 78–94 (RGAAAGSGVPAAPGPSG). A Glycyl lysine isopeptide (Lys-Gly) (interchain with G-Cter in SUMO2) cross-link involves residue Lys-120. Ser-154 carries the phosphoserine modification. One can recognise a Sm domain in the interval 154–229 (SPLGELHRCI…LTLTRLFDRL (76 aa)). Positions 171-204 (VHIRTFKGLRGVCTGFLVAFDKFWNMALTDVDET) are SM 1. The interval 268–333 (ADTGRGSHKR…SRKKKRKPKV (66 aa)) is disordered. Ser-280 is subject to Phosphoserine. The span at 299–322 (GRTTRTDGSSVGGTFSRATTLSRG) shows a compositional bias: polar residues. Residues 343–356 (INQIFIRGENVLLV) are SM 2.

The protein belongs to the snRNP Sm proteins family. As to quaternary structure, component of the heptameric ring U7 snRNP complex, or U7 Sm protein core complex, at least composed of LSM10, LSM11, SNRPB, SNRPD3, SNRPE, SNRPF, SNRPG and U7 snRNA. Formation of the U7 snRNP is an ATP-dependent process mediated by a specialized SMN complex containing at least the Sm protein core complex and additionally, the U7-specific LSM10 and LSM11 proteins. Identified in a histone pre-mRNA complex, at least composed of ERI1, LSM11, SLBP, SNRPB, SYNCRIP and YBX1. Interacts (via the Sm domains) with CLNS1A. Interacts with SMN and ZNF473. Interacts with PRMT5 and WDR77.

It localises to the nucleus. Functionally, component of the U7 snRNP complex that is involved in the histone 3'-end pre-mRNA processing. Increases U7 snRNA levels but not histone 3'-end pre-mRNA processing activity, when overexpressed. Required for cell cycle progression from G1 to S phases. Binds specifically to the Sm-binding site of U7 snRNA. The chain is U7 snRNA-associated Sm-like protein LSm11 from Homo sapiens (Human).